We begin with the raw amino-acid sequence, 304 residues long: Undecaprenyl-diphosphatase (304 aa).

Helical transmembrane passes span 5-25, 47-67, 72-92, 111-131, 137-157, 209-231, 248-268, and 283-303; these read FLFI…EFVP, GFPE…VVVL, ISSS…LKTS, FGIN…LFHD, LFST…LIVI, ISGL…AMVG, TNWI…LVVI, and FAIY…TKVI.

This sequence belongs to the UppP family.

The protein resides in the cell membrane. It carries out the reaction di-trans,octa-cis-undecaprenyl diphosphate + H2O = di-trans,octa-cis-undecaprenyl phosphate + phosphate + H(+). Its function is as follows. Catalyzes the dephosphorylation of undecaprenyl diphosphate (UPP). Confers resistance to bacitracin. In Clostridium perfringens (strain ATCC 13124 / DSM 756 / JCM 1290 / NCIMB 6125 / NCTC 8237 / Type A), this protein is Undecaprenyl-diphosphatase.